Reading from the N-terminus, the 294-residue chain is tRNA pseudouridine synthase B (294 aa).

The active-site Nucleophile is the D39.

It belongs to the pseudouridine synthase TruB family. Type 1 subfamily.

The catalysed reaction is uridine(55) in tRNA = pseudouridine(55) in tRNA. In terms of biological role, responsible for synthesis of pseudouridine from uracil-55 in the psi GC loop of transfer RNAs. The sequence is that of tRNA pseudouridine synthase B from Streptococcus pyogenes serotype M5 (strain Manfredo).